We begin with the raw amino-acid sequence, 155 residues long: uncharacterized protein (155 aa).

Transmembrane regions (helical) follow at residues 4–24 (IVGA…AGYL), 46–66 (AIGI…AIVY), 77–97 (FWFT…FQFT), 101–121 (LLAA…LLII), and 130–150 (SYLL…SFTI).

It belongs to the TspO/BZRP family.

It localises to the cell membrane. This is an uncharacterized protein from Bacillus subtilis (strain 168).